A 926-amino-acid polypeptide reads, in one-letter code: Eukaryotic translation initiation factor 3 subunit C (926 aa).

Disordered regions lie at residues 1–36 (MSRF…KQPI) and 158–309 (AYKQ…KVKG). The segment covering 8–21 (GSDSESESSLSGDE) has biased composition (low complexity). A compositionally biased stretch (acidic residues) spans 165–189 (ESADEDQEKDEDSEASSSSDDDSDE). Over residues 207–216 (SRSKFLKKEE) the composition is skewed to basic and acidic residues. Acidic residues predominate over residues 217–243 (AEDEAESSEDEDWGSDSDESDSDESDD). Residues 258–275 (TVTEGDRQAVEKKKEDKA) show a composition bias toward basic and acidic residues. Residues 289 to 302 (EGEEGEEDDNEGGG) are compositionally biased toward acidic residues. The 177-residue stretch at 675-851 (FHMHINLELL…QTVVMHGTEP (177 aa)) folds into the PCI domain. Positions 880-926 (QGSYGGYFNRGDRGDRGDRDQKDQYQRKEGGYMRRGYRRDQQGQSNY) are disordered. A compositionally biased stretch (basic and acidic residues) spans 889–911 (RGDRGDRGDRDQKDQYQRKEGGY).

It belongs to the eIF-3 subunit C family. Component of the eukaryotic translation initiation factor 3 (eIF-3) complex, which is composed of 13 subunits: eif3a, eif3b, eif3c, eif3d, eif3e, eif3f, eif3g, eif3h, eif3i, eif3j, eif3k, eif3l and eif3m.

It localises to the cytoplasm. In terms of biological role, component of the eukaryotic translation initiation factor 3 (eIF-3) complex, which is involved in protein synthesis of a specialized repertoire of mRNAs and, together with other initiation factors, stimulates binding of mRNA and methionyl-tRNAi to the 40S ribosome. The eIF-3 complex specifically targets and initiates translation of a subset of mRNAs involved in cell proliferation. In Xenopus laevis (African clawed frog), this protein is Eukaryotic translation initiation factor 3 subunit C (eif3c).